The chain runs to 265 residues: Putative 2-aminoethylphosphonate transport system permease protein PhnV (265 aa).

6 helical membrane-spanning segments follow: residues glycine 13–methionine 33, leucine 69–alanine 89, valine 104–phenylalanine 124, methionine 131–phenylalanine 151, leucine 185–glycine 205, and asparagine 233–methionine 253. Residues leucine 65–methionine 253 form the ABC transmembrane type-1 domain.

It belongs to the binding-protein-dependent transport system permease family.

It localises to the cell inner membrane. Functionally, probably part of the PhnSTUV complex (TC 3.A.1.11.5) involved in 2-aminoethylphosphonate import. Probably responsible for the translocation of the substrate across the membrane. The protein is Putative 2-aminoethylphosphonate transport system permease protein PhnV (phnV) of Salmonella typhimurium (strain LT2 / SGSC1412 / ATCC 700720).